We begin with the raw amino-acid sequence, 163 residues long: Epithelial membrane protein 3 (163 aa).

A helical membrane pass occupies residues 4 to 24 (LLLVVSALHILILILLFVATL). N-linked (GlcNAc...) asparagine glycosylation is found at Asn-47 and Asn-56. The next 3 membrane-spanning stretches (helical) occupy residues 66–86 (VQVL…LFMF), 100–120 (TGLC…IYAI), and 139–159 (FALA…YIHL).

Belongs to the PMP-22/EMP/MP20 family.

The protein resides in the membrane. Functionally, probably involved in cell proliferation and cell-cell interactions. This is Epithelial membrane protein 3 (EMP3) from Homo sapiens (Human).